Here is a 227-residue protein sequence, read N- to C-terminus: Cytochrome c oxidase subunit 2 (227 aa).

Over 1–14 (MAYPLQLGFQDAVS) the chain is Mitochondrial intermembrane. A helical membrane pass occupies residues 15-45 (PIMEELLYFHDHTLMIVFLISSLVLYIITLM). Residues 46-59 (LTTKLTHTNTMNAQ) are Mitochondrial matrix-facing. Residues 60-87 (EVETVWTILPAIILILIALPSLRILYMM) traverse the membrane as a helical segment. Residues 88–227 (DEINNPSLTV…TFEKWTASLL (140 aa)) are Mitochondrial intermembrane-facing. The Cu cation site is built by H161, C196, E198, C200, H204, and M207. E198 contacts Mg(2+).

The protein belongs to the cytochrome c oxidase subunit 2 family. As to quaternary structure, component of the cytochrome c oxidase (complex IV, CIV), a multisubunit enzyme composed of 14 subunits. The complex is composed of a catalytic core of 3 subunits MT-CO1, MT-CO2 and MT-CO3, encoded in the mitochondrial DNA, and 11 supernumerary subunits COX4I, COX5A, COX5B, COX6A, COX6B, COX6C, COX7A, COX7B, COX7C, COX8 and NDUFA4, which are encoded in the nuclear genome. The complex exists as a monomer or a dimer and forms supercomplexes (SCs) in the inner mitochondrial membrane with NADH-ubiquinone oxidoreductase (complex I, CI) and ubiquinol-cytochrome c oxidoreductase (cytochrome b-c1 complex, complex III, CIII), resulting in different assemblies (supercomplex SCI(1)III(2)IV(1) and megacomplex MCI(2)III(2)IV(2)). Found in a complex with TMEM177, COA6, COX18, COX20, SCO1 and SCO2. Interacts with TMEM177 in a COX20-dependent manner. Interacts with COX20. Interacts with COX16. Cu cation is required as a cofactor.

It is found in the mitochondrion inner membrane. The catalysed reaction is 4 Fe(II)-[cytochrome c] + O2 + 8 H(+)(in) = 4 Fe(III)-[cytochrome c] + 2 H2O + 4 H(+)(out). In terms of biological role, component of the cytochrome c oxidase, the last enzyme in the mitochondrial electron transport chain which drives oxidative phosphorylation. The respiratory chain contains 3 multisubunit complexes succinate dehydrogenase (complex II, CII), ubiquinol-cytochrome c oxidoreductase (cytochrome b-c1 complex, complex III, CIII) and cytochrome c oxidase (complex IV, CIV), that cooperate to transfer electrons derived from NADH and succinate to molecular oxygen, creating an electrochemical gradient over the inner membrane that drives transmembrane transport and the ATP synthase. Cytochrome c oxidase is the component of the respiratory chain that catalyzes the reduction of oxygen to water. Electrons originating from reduced cytochrome c in the intermembrane space (IMS) are transferred via the dinuclear copper A center (CU(A)) of subunit 2 and heme A of subunit 1 to the active site in subunit 1, a binuclear center (BNC) formed by heme A3 and copper B (CU(B)). The BNC reduces molecular oxygen to 2 water molecules using 4 electrons from cytochrome c in the IMS and 4 protons from the mitochondrial matrix. This Hippopotamus amphibius (Hippopotamus) protein is Cytochrome c oxidase subunit 2 (MT-CO2).